The following is a 297-amino-acid chain: Translational activator of cytochrome c oxidase 1 (297 aa).

The disordered stretch occupies residues 20–45 (RGPGVRAAPPRDPRPSHPEPRGCGAA). Residues 28-39 (PPRDPRPSHPEP) show a composition bias toward basic and acidic residues. Positions 191-227 (VEVEDREKKAVNLERALEMAIEAGAEDVKETEDEEER) form a coiled coil.

Belongs to the TACO1 family.

It localises to the mitochondrion. Its function is as follows. Acts as a translational activator of mitochondrially-encoded cytochrome c oxidase 1. This is Translational activator of cytochrome c oxidase 1 (TACO1) from Homo sapiens (Human).